A 388-amino-acid chain; its full sequence is Mitochondrial distribution and morphology protein 12 (388 aa).

The region spanning 1-388 (MSLDINWSLL…VFPNFHTVAL (388 aa)) is the SMP-LTD domain. Disordered regions lie at residues 75-101 (DDEG…RNEA) and 209-251 (PMSI…SSSS). A compositionally biased stretch (basic and acidic residues) spans 83-101 (EEKQREKEREERDKLRNEA). The segment covering 234 to 243 (PSPPAHPAGL) has biased composition (pro residues).

The protein belongs to the MDM12 family. Component of the ER-mitochondria encounter structure (ERMES) or MDM complex, composed of MMM1, MDM10, MDM12 and MDM34. An MMM1 homodimer associates with one molecule of MDM12 on each side in a pairwise head-to-tail manner, and the SMP-LTD domains of MMM1 and MDM12 generate a continuous hydrophobic tunnel for phospholipid trafficking.

The protein resides in the mitochondrion outer membrane. It localises to the endoplasmic reticulum membrane. In terms of biological role, component of the ERMES/MDM complex, which serves as a molecular tether to connect the endoplasmic reticulum (ER) and mitochondria. Components of this complex are involved in the control of mitochondrial shape and protein biogenesis, and function in nonvesicular lipid trafficking between the ER and mitochondria. MDM12 is required for the interaction of the ER-resident membrane protein MMM1 and the outer mitochondrial membrane-resident beta-barrel protein MDM10. The MDM12-MMM1 subcomplex functions in the major beta-barrel assembly pathway that is responsible for biogenesis of all mitochondrial outer membrane beta-barrel proteins, and acts in a late step after the SAM complex. The MDM10-MDM12-MMM1 subcomplex further acts in the TOM40-specific pathway after the action of the MDM12-MMM1 complex. Essential for establishing and maintaining the structure of mitochondria and maintenance of mtDNA nucleoids. The sequence is that of Mitochondrial distribution and morphology protein 12 from Cryptococcus neoformans var. neoformans serotype D (strain B-3501A) (Filobasidiella neoformans).